The primary structure comprises 302 residues: Phosphatidylglycerol--prolipoprotein diacylglyceryl transferase (302 aa).

The next 3 helical transmembrane spans lie at 26-46 (WYAL…VMLV), 67-87 (LVLW…VLFY), and 108-128 (IWEG…AIVL). An a 1,2-diacyl-sn-glycero-3-phospho-(1'-sn-glycerol)-binding site is contributed by R156. The next 2 helical transmembrane spans lie at 231-251 (GALV…LEGV) and 263-283 (LGLT…VWLL).

The protein belongs to the Lgt family.

It localises to the cell inner membrane. It carries out the reaction L-cysteinyl-[prolipoprotein] + a 1,2-diacyl-sn-glycero-3-phospho-(1'-sn-glycerol) = an S-1,2-diacyl-sn-glyceryl-L-cysteinyl-[prolipoprotein] + sn-glycerol 1-phosphate + H(+). Its pathway is protein modification; lipoprotein biosynthesis (diacylglyceryl transfer). In terms of biological role, catalyzes the transfer of the diacylglyceryl group from phosphatidylglycerol to the sulfhydryl group of the N-terminal cysteine of a prolipoprotein, the first step in the formation of mature lipoproteins. The polypeptide is Phosphatidylglycerol--prolipoprotein diacylglyceryl transferase (Caulobacter sp. (strain K31)).